Here is a 584-residue protein sequence, read N- to C-terminus: Arginine--tRNA ligase (584 aa).

A 'HIGH' region motif is present at residues 127-137 (PNLAKEMHVGH).

It belongs to the class-I aminoacyl-tRNA synthetase family. As to quaternary structure, monomer.

Its subcellular location is the cytoplasm. The enzyme catalyses tRNA(Arg) + L-arginine + ATP = L-arginyl-tRNA(Arg) + AMP + diphosphate. This chain is Arginine--tRNA ligase, found in Alcanivorax borkumensis (strain ATCC 700651 / DSM 11573 / NCIMB 13689 / SK2).